The primary structure comprises 205 residues: MSKRIQAKHKLDRRMGQNIWGRPKSPVNRREYGPGQHGQRRKGKMSDFGTQLRAKQKLKGYYGNITEKQFRRYYAEAIRLRGDSGENLVGLLERRLDAVVYRAKFVATPFAARQFVNHGHVKVNGVRVNIPSYQVKAGDLIEVKESSRQLEIVIVATQLSERDVPDYIEADHAKMTARVTRIPSLSEVPYPVQMEPNLVIEFYSR.

Basic residues predominate over residues methionine 1–aspartate 12. Residues methionine 1 to glycine 49 form a disordered region. An S4 RNA-binding domain is found at arginine 94–valine 155.

Belongs to the universal ribosomal protein uS4 family. In terms of assembly, part of the 30S ribosomal subunit. Contacts protein S5. The interaction surface between S4 and S5 is involved in control of translational fidelity.

Functionally, one of the primary rRNA binding proteins, it binds directly to 16S rRNA where it nucleates assembly of the body of the 30S subunit. In terms of biological role, with S5 and S12 plays an important role in translational accuracy. The polypeptide is Small ribosomal subunit protein uS4 (Methylobacterium radiotolerans (strain ATCC 27329 / DSM 1819 / JCM 2831 / NBRC 15690 / NCIMB 10815 / 0-1)).